The sequence spans 396 residues: Anaerobic glycerol-3-phosphate dehydrogenase subunit C (396 aa).

4Fe-4S ferredoxin-type domains are found at residues 2-29 (NDTS…PGYP) and 45-76 (DGAL…GDII). Cys-9, Cys-12, Cys-15, Cys-19, Cys-56, Cys-59, Cys-62, and Cys-66 together coordinate [4Fe-4S] cluster.

Composed of a catalytic GlpA/B dimer and of GlpC.

The protein resides in the cell inner membrane. Its pathway is polyol metabolism; glycerol degradation via glycerol kinase pathway; glycerone phosphate from sn-glycerol 3-phosphate (anaerobic route): step 1/1. Electron transfer protein; may also function as the membrane anchor for the GlpAB dimer. The sequence is that of Anaerobic glycerol-3-phosphate dehydrogenase subunit C (glpC) from Escherichia coli O157:H7.